The primary structure comprises 1028 residues: Unconventional myosin-Ic (1028 aa).

At M1 the chain carries N-acetylmethionine. The 685-residue stretch at 12–696 (GVQDFVLLEN…TLFATEDALE (685 aa)) folds into the Myosin motor domain. Residues N53, Y61, 104–113 (SGESGAGKTE), and 157–161 (NDNSS) contribute to the ATP site. K348 carries the post-translational modification N6-methyllysine. Positions 573–595 (LSKLMEILMSKQPSYVRCIKPND) are actin-binding. 2 consecutive IQ domains span residues 699 to 728 (KHSI…SAVE) and 722 to 751 (MKHS…AVDV). The 175-residue stretch at 850–1024 (KDNYPQSVPR…NGHLSVVAPR (175 aa)) folds into the TH1 domain.

This sequence belongs to the TRAFAC class myosin-kinesin ATPase superfamily. Myosin family. In terms of assembly, interacts (via its IQ motifs) with calmodulin. In terms of tissue distribution, expressed in brain and the sacculus of the internal ear.

The protein localises to the cytoplasm. It is found in the cell membrane. The protein resides in the cell projection. It localises to the ruffle membrane. Its subcellular location is the cytoplasmic vesicle. The protein localises to the stereocilium membrane. Myosins are actin-based motor molecules with ATPase activity. Unconventional myosins serve in intracellular movements. Their highly divergent tails are presumed to bind to membranous compartments, which would be moved relative to actin filaments. In Aquarana catesbeiana (American bullfrog), this protein is Unconventional myosin-Ic (Myo1c).